We begin with the raw amino-acid sequence, 125 residues long: Histone H2A (125 aa).

Positions 1-18 (MSGRGKGGKAKAKAKSRS) are enriched in basic residues. Residues 1–21 (MSGRGKGGKAKAKAKSRSSRA) form a disordered region. N-acetylserine is present on Ser-2. Gln-104 bears the N5-methylglutamine mark.

The protein belongs to the histone H2A family. The nucleosome is a histone octamer containing two molecules each of H2A, H2B, H3 and H4 assembled in one H3-H4 heterotetramer and two H2A-H2B heterodimers. The octamer wraps approximately 147 bp of DNA.

The protein localises to the nucleus. The protein resides in the chromosome. In terms of biological role, core component of nucleosome. Nucleosomes wrap and compact DNA into chromatin, limiting DNA accessibility to the cellular machineries which require DNA as a template. Histones thereby play a central role in transcription regulation, DNA repair, DNA replication and chromosomal stability. DNA accessibility is regulated via a complex set of post-translational modifications of histones, also called histone code, and nucleosome remodeling. The chain is Histone H2A from Mytilus californianus (California mussel).